Consider the following 715-residue polypeptide: Tegument protein UL46 (715 aa).

Disordered stretches follow at residues 432–513 (WSAG…CAAQ), 585–605 (DDAR…APYE), and 659–680 (GSAL…PSPV). Residues 444 to 455 (GPGGHRAGGGTV) show a composition bias toward gly residues. 2 stretches are compositionally biased toward low complexity: residues 456-467 (GKRFSGPARQRA) and 475-488 (PTLD…VPEA). Over residues 664–677 (SPPPRPPPPPPLSP) the composition is skewed to pro residues.

It belongs to the herpesviridae HHV-1 VP11/12 protein family. In terms of assembly, interacts with VP16. Interacts with host LCK, PIK3R1, SHC1 AND GRB2; these interactions promote the activation of the PI3K/AKT pathway. Interacts with host YWHAB. Interacts with ICP0; this interaction targets UL46 for degradation by the proteasome. Phosphorylated by host LCK. The phosphorylation seems to be lymphocyte-specific.

The protein resides in the virion tegument. Its subcellular location is the host cell membrane. Its function is as follows. Plays a role in the activation of the host PI3K/AKT pathway to promote cell survival. Interacts with and activates host LCK and thereby recruits downstream partners SHC1, GRB2 and PI3KR1 in order to activate the PI3K pathway by phosphorylating host AKT on its activating residues. This mechanism is inhibited by the viral protein US3 that instead promotes incorporation of UL46 into virions. The protein is Tegument protein UL46 of Human herpesvirus 1 (strain F) (HHV-1).